A 269-amino-acid chain; its full sequence is MHQDYRELSLDELESVEKQTLRTIVQALQQYSKEAKSIFETTAADSSGEVIVLAEDITQYALEVAETYPINRRFAGFIDYKRVRWLPSPHGLLPQVLLVDAKASTEKNRDTLQRSQLPMDAEFRNTSSGEVVTMEAGVIPHLMLQSANDGVLPAVTTSIFVHFYYRELKDVEGRYRELKSIYVLSLPHARLKQRYNPDPDTSFFGAGKHSPARGEVARIRVYFDRLKEACPWRLQELHYSADSEYTQPRWRDLNDAGHEVTKEFLFLER.

The catalysed reaction is Endonucleolytic cleavage of DNA to give specific double-stranded fragments with terminal 5'-phosphates.. Its function is as follows. An F and P subtype restriction enzyme that recognizes the double-stranded sequence 5'-GGCCN(5)GGCC-3' and cleaves before N-9. This chain is Type II restriction enzyme SfiI (sfiIR), found in Streptomyces fimbriatus.